Consider the following 1380-residue polypeptide: DNA-directed RNA polymerase subunit beta (1380 aa).

Belongs to the RNA polymerase beta chain family. In terms of assembly, the RNAP catalytic core consists of 2 alpha, 1 beta, 1 beta' and 1 omega subunit. When a sigma factor is associated with the core the holoenzyme is formed, which can initiate transcription.

The enzyme catalyses RNA(n) + a ribonucleoside 5'-triphosphate = RNA(n+1) + diphosphate. DNA-dependent RNA polymerase catalyzes the transcription of DNA into RNA using the four ribonucleoside triphosphates as substrates. This Nitrobacter winogradskyi (strain ATCC 25391 / DSM 10237 / CIP 104748 / NCIMB 11846 / Nb-255) protein is DNA-directed RNA polymerase subunit beta.